A 629-amino-acid polypeptide reads, in one-letter code: tRNA uridine 5-carboxymethylaminomethyl modification enzyme MnmG (629 aa).

Residues 18–23 (GGGHAG), Val-130, and Ser-188 contribute to the FAD site. 280-294 (GPRYCPSIEDKVVRF) is an NAD(+) binding site. Gln-377 is an FAD binding site.

The protein belongs to the MnmG family. As to quaternary structure, homodimer. Heterotetramer of two MnmE and two MnmG subunits. FAD serves as cofactor.

It is found in the cytoplasm. NAD-binding protein involved in the addition of a carboxymethylaminomethyl (cmnm) group at the wobble position (U34) of certain tRNAs, forming tRNA-cmnm(5)s(2)U34. The protein is tRNA uridine 5-carboxymethylaminomethyl modification enzyme MnmG of Granulibacter bethesdensis (strain ATCC BAA-1260 / CGDNIH1).